A 183-amino-acid polypeptide reads, in one-letter code: MTKQPEDWLDDVPGDDIEDEDDEIIWVSKSEIKRDAEELKRLGAEIVDLGKNALDKIPLDADLRAAIELAQRIKMEGRRRQLQLIGKMLRQRDVEPIRQALDKLKNRHNQQVVLFHKLENLRDRLIDQGDDAIAEVLNLWPDADRQQLRTLIRNAKKEKEGNKPPKSARQIFQYLRELAENEE.

The protein belongs to the DarP family.

It is found in the cytoplasm. In terms of biological role, member of a network of 50S ribosomal subunit biogenesis factors which assembles along the 30S-50S interface, preventing incorrect 23S rRNA structures from forming. Promotes peptidyl transferase center (PTC) maturation. The polypeptide is Dual-action ribosomal maturation protein DarP (Shigella boydii serotype 18 (strain CDC 3083-94 / BS512)).